The chain runs to 579 residues: Nif-specific regulatory protein (579 aa).

Positions Asp40 to Leu187 constitute a GAF domain. In terms of domain architecture, Sigma-54 factor interaction spans Ile226 to Ala454. Residues Gly254–Glu261 and Ala317–Glu326 each bind ATP. The interval Glu464 to Ser536 is inter-domain linker. A divalent metal cation-binding residues include Cys468 and Cys473. The interval Arg502–Arg529 is disordered. 7 consecutive repeat copies span residues Ala505 to Pro506, Pro507 to Pro508, Glu509 to Pro510, Ala511 to Pro512, Ala513 to Pro514, Glu515 to Pro516, and Ala517 to Pro518. The interval Ala505–Pro518 is 7 X 2 AA tandem repeats of X-P. The span at Ala505–Ala520 shows a compositional bias: pro residues. The interval Arg537–Ile579 is C-terminal DNA-binding domain. Positions Gln551–Gln570 form a DNA-binding region, H-T-H motif.

As to quaternary structure, interacts with sigma-54.

Functionally, required for activation of most nif operons, which are directly involved in nitrogen fixation. The sequence is that of Nif-specific regulatory protein (nifA1) from Rhodobacter capsulatus (strain ATCC BAA-309 / NBRC 16581 / SB1003).